The chain runs to 1412 residues: DNA-directed RNA polymerase subunit beta' (1412 aa).

Residues Cys-70, Cys-72, Cys-85, and Cys-88 each coordinate Zn(2+). Asp-458, Asp-460, and Asp-462 together coordinate Mg(2+). Residues Cys-813, Cys-887, Cys-894, and Cys-897 each contribute to the Zn(2+) site. The interval 1388–1412 (EQALLTPATTAEAVVGEEPAPPPAQ) is disordered. A compositionally biased stretch (low complexity) spans 1393–1405 (TPATTAEAVVGEE).

It belongs to the RNA polymerase beta' chain family. As to quaternary structure, the RNAP catalytic core consists of 2 alpha, 1 beta, 1 beta' and 1 omega subunit. When a sigma factor is associated with the core the holoenzyme is formed, which can initiate transcription. It depends on Mg(2+) as a cofactor. Requires Zn(2+) as cofactor.

The catalysed reaction is RNA(n) + a ribonucleoside 5'-triphosphate = RNA(n+1) + diphosphate. DNA-dependent RNA polymerase catalyzes the transcription of DNA into RNA using the four ribonucleoside triphosphates as substrates. In Methylibium petroleiphilum (strain ATCC BAA-1232 / LMG 22953 / PM1), this protein is DNA-directed RNA polymerase subunit beta'.